The primary structure comprises 186 residues: ATP synthase subunit delta (186 aa).

Belongs to the ATPase delta chain family. In terms of assembly, F-type ATPases have 2 components, F(1) - the catalytic core - and F(0) - the membrane proton channel. F(1) has five subunits: alpha(3), beta(3), gamma(1), delta(1), epsilon(1). F(0) has three main subunits: a(1), b(2) and c(10-14). The alpha and beta chains form an alternating ring which encloses part of the gamma chain. F(1) is attached to F(0) by a central stalk formed by the gamma and epsilon chains, while a peripheral stalk is formed by the delta and b chains.

It is found in the cell inner membrane. In terms of biological role, f(1)F(0) ATP synthase produces ATP from ADP in the presence of a proton or sodium gradient. F-type ATPases consist of two structural domains, F(1) containing the extramembraneous catalytic core and F(0) containing the membrane proton channel, linked together by a central stalk and a peripheral stalk. During catalysis, ATP synthesis in the catalytic domain of F(1) is coupled via a rotary mechanism of the central stalk subunits to proton translocation. This protein is part of the stalk that links CF(0) to CF(1). It either transmits conformational changes from CF(0) to CF(1) or is implicated in proton conduction. The polypeptide is ATP synthase subunit delta (Ruegeria pomeroyi (strain ATCC 700808 / DSM 15171 / DSS-3) (Silicibacter pomeroyi)).